The chain runs to 222 residues: tRNA (guanine-N(1)-)-methyltransferase (222 aa).

Residues glycine 112 and 132 to 137 each bind S-adenosyl-L-methionine; that span reads IGDYVL.

This sequence belongs to the RNA methyltransferase TrmD family. As to quaternary structure, homodimer.

The protein resides in the cytoplasm. It carries out the reaction guanosine(37) in tRNA + S-adenosyl-L-methionine = N(1)-methylguanosine(37) in tRNA + S-adenosyl-L-homocysteine + H(+). Its function is as follows. Specifically methylates guanosine-37 in various tRNAs. In Azobacteroides pseudotrichonymphae genomovar. CFP2, this protein is tRNA (guanine-N(1)-)-methyltransferase.